We begin with the raw amino-acid sequence, 100 residues long: Aspartyl/glutamyl-tRNA(Asn/Gln) amidotransferase subunit C (100 aa).

The protein belongs to the GatC family. Heterotrimer of A, B and C subunits.

The catalysed reaction is L-glutamyl-tRNA(Gln) + L-glutamine + ATP + H2O = L-glutaminyl-tRNA(Gln) + L-glutamate + ADP + phosphate + H(+). It catalyses the reaction L-aspartyl-tRNA(Asn) + L-glutamine + ATP + H2O = L-asparaginyl-tRNA(Asn) + L-glutamate + ADP + phosphate + 2 H(+). Allows the formation of correctly charged Asn-tRNA(Asn) or Gln-tRNA(Gln) through the transamidation of misacylated Asp-tRNA(Asn) or Glu-tRNA(Gln) in organisms which lack either or both of asparaginyl-tRNA or glutaminyl-tRNA synthetases. The reaction takes place in the presence of glutamine and ATP through an activated phospho-Asp-tRNA(Asn) or phospho-Glu-tRNA(Gln). This Dictyoglomus thermophilum (strain ATCC 35947 / DSM 3960 / H-6-12) protein is Aspartyl/glutamyl-tRNA(Asn/Gln) amidotransferase subunit C.